Here is a 309-residue protein sequence, read N- to C-terminus: p-hydroxybenzoic acid efflux pump subunit AaeA (309 aa).

Residues 12–32 (AITVVLVILAFIAIFNAWVYY) form a helical membrane-spanning segment.

This sequence belongs to the membrane fusion protein (MFP) (TC 8.A.1) family.

It is found in the cell inner membrane. In terms of biological role, forms an efflux pump with AaeB. The chain is p-hydroxybenzoic acid efflux pump subunit AaeA from Escherichia coli O157:H7.